We begin with the raw amino-acid sequence, 161 residues long: Crossover junction endodeoxyribonuclease RuvC (161 aa).

Residues Asp9, Glu72, and Asp144 contribute to the active site. 3 residues coordinate Mg(2+): Asp9, Glu72, and Asp144.

It belongs to the RuvC family. As to quaternary structure, homodimer which binds Holliday junction (HJ) DNA. The HJ becomes 2-fold symmetrical on binding to RuvC with unstacked arms; it has a different conformation from HJ DNA in complex with RuvA. In the full resolvosome a probable DNA-RuvA(4)-RuvB(12)-RuvC(2) complex forms which resolves the HJ. The cofactor is Mg(2+).

It localises to the cytoplasm. The enzyme catalyses Endonucleolytic cleavage at a junction such as a reciprocal single-stranded crossover between two homologous DNA duplexes (Holliday junction).. The RuvA-RuvB-RuvC complex processes Holliday junction (HJ) DNA during genetic recombination and DNA repair. Endonuclease that resolves HJ intermediates. Cleaves cruciform DNA by making single-stranded nicks across the HJ at symmetrical positions within the homologous arms, yielding a 5'-phosphate and a 3'-hydroxyl group; requires a central core of homology in the junction. The consensus cleavage sequence is 5'-(A/T)TT(C/G)-3'. Cleavage occurs on the 3'-side of the TT dinucleotide at the point of strand exchange. HJ branch migration catalyzed by RuvA-RuvB allows RuvC to scan DNA until it finds its consensus sequence, where it cleaves and resolves the cruciform DNA. This chain is Crossover junction endodeoxyribonuclease RuvC, found in Synechococcus sp. (strain ATCC 27144 / PCC 6301 / SAUG 1402/1) (Anacystis nidulans).